Here is a 731-residue protein sequence, read N- to C-terminus: Lanosterol synthase ERG7 (731 aa).

T2 carries the post-translational modification N-acetylthreonine. One copy of the PFTB 1 repeat lies at 125-167 (RIELIRYIVNTAHPVDGGWGLHSVDKSTVFGTVLNYVILRLLG). Residue D456 is the Proton donor of the active site. The stretch at 615-661 (VRKGCDFLVSKQMKDGGWGESMKSSELHSYVDSEKSLVVQTAWALIA) is one PFTB 2 repeat.

The protein belongs to the terpene cyclase/mutase family.

Its subcellular location is the lipid droplet. It localises to the endoplasmic reticulum membrane. The catalysed reaction is (S)-2,3-epoxysqualene = lanosterol. It functions in the pathway terpene metabolism; lanosterol biosynthesis; lanosterol from farnesyl diphosphate: step 3/3. With respect to regulation, catalytic activity requires the presence of ERG27. Lanosterol synthase; part of the third module of ergosterol biosynthesis pathway that includes the late steps of the pathway. ERG7 catalyzes the cyclization of (S)-2,3 oxidosqualene to lanosterol, a reaction that forms the sterol core. The third module or late pathway involves the ergosterol synthesis itself through consecutive reactions that mainly occur in the endoplasmic reticulum (ER) membrane. Firstly, the squalene synthase ERG9 catalyzes the condensation of 2 farnesyl pyrophosphate moieties to form squalene, which is the precursor of all steroids. Squalene synthase is crucial for balancing the incorporation of farnesyl diphosphate (FPP) into sterol and nonsterol isoprene synthesis. Secondly, the squalene epoxidase ERG1 catalyzes the stereospecific oxidation of squalene to (S)-2,3-epoxysqualene, which is considered to be a rate-limiting enzyme in steroid biosynthesis. Then, the lanosterol synthase ERG7 catalyzes the cyclization of (S)-2,3 oxidosqualene to lanosterol, a reaction that forms the sterol core. In the next steps, lanosterol is transformed to zymosterol through a complex process involving various demethylation, reduction and desaturation reactions. The lanosterol 14-alpha-demethylase ERG11 (also known as CYP51) catalyzes C14-demethylation of lanosterol to produce 4,4'-dimethyl cholesta-8,14,24-triene-3-beta-ol, which is critical for ergosterol biosynthesis. The C-14 reductase ERG24 reduces the C14=C15 double bond of 4,4-dimethyl-cholesta-8,14,24-trienol to produce 4,4-dimethyl-cholesta-8,24-dienol. 4,4-dimethyl-cholesta-8,24-dienol is substrate of the C-4 demethylation complex ERG25-ERG26-ERG27 in which ERG25 catalyzes the three-step monooxygenation required for the demethylation of 4,4-dimethyl and 4alpha-methylsterols, ERG26 catalyzes the oxidative decarboxylation that results in a reduction of the 3-beta-hydroxy group at the C-3 carbon to an oxo group, and ERG27 is responsible for the reduction of the keto group on the C-3. ERG28 has a role as a scaffold to help anchor ERG25, ERG26 and ERG27 to the endoplasmic reticulum and ERG29 regulates the activity of the iron-containing C4-methylsterol oxidase ERG25. Then, the sterol 24-C-methyltransferase ERG6 catalyzes the methyl transfer from S-adenosyl-methionine to the C-24 of zymosterol to form fecosterol. The C-8 sterol isomerase ERG2 catalyzes the reaction which results in unsaturation at C-7 in the B ring of sterols and thus converts fecosterol to episterol. The sterol-C5-desaturase ERG3 then catalyzes the introduction of a C-5 double bond in the B ring to produce 5-dehydroepisterol. The C-22 sterol desaturase ERG5 further converts 5-dehydroepisterol into ergosta-5,7,22,24(28)-tetraen-3beta-ol by forming the C-22(23) double bond in the sterol side chain. Finally, ergosta-5,7,22,24(28)-tetraen-3beta-ol is substrate of the C-24(28) sterol reductase ERG4 to produce ergosterol. This Saccharomyces cerevisiae (strain ATCC 204508 / S288c) (Baker's yeast) protein is Lanosterol synthase ERG7.